A 63-amino-acid chain; its full sequence is Frenatin 1.1 (63 aa).

The N-terminal stretch at 1–22 (MAFLKKSLFLVLFLGLVSLSIC) is a signal peptide. The propeptide occupies 23-49 (EKEKKEQEDEDENEEEKESEEGSEEKR). The disordered stretch occupies residues 25–63 (EKKEQEDEDENEEEKESEEGSEEKRGLLDTLGGILGLGR). The segment covering 30–45 (EDEDENEEEKESEEGS) has biased composition (acidic residues). The residue at position 61 (leucine 61) is a Leucine amide.

Expressed by the skin glands.

Its subcellular location is the secreted. Antimicrobial peptide with selective activity. Is only active against Micrococcus luteus (MIC=25 ug/ml) and not against Bacillus cereus, Escherichia coli, Leuconostoc mesenteroides, Micrococcus luteus, Pastewella haemolytica, Staphylococcus aureus, Streptococcus faecalis and Streptococcus uberis. The chain is Frenatin 1.1 from Nyctimystes infrafrenatus (White-lipped tree frog).